The following is a 445-amino-acid chain: MAAPTPARPVLTHLLVALFGMGSWAAVNGIWVELPVVVKELPEGWSLPSYVSVLVALGNLGLLVVTLWRRLAPGKDEQVPIRVVQVLGMVGTALLASLWHHVAPVAGQLHSVAFLALAFVLALACCASNVTFLPFLSHLPPRFLRSFFLGQGLSALLPCVLALVQGVGRLECPPAPINGTPGPPLDFLERFPASTFFWALTALLVASAAAFQGLLLLLPPPPSVPTGELGSGLQVGAPGAEEEVEESSPLQEPPSQAAGTTPGPDPKAYQLLSARSACLLGLLAATNALTNGVLPAVQSFSCLPYGRLAYHLAVVLGSAANPLACFLAMGVLCRSLAGLGGLSLLGVFCGGYLMALAVLSPCPPLVGTSAGVVLVVLSWVLCLGVFSYVKVAASSLLHGGGRPALLAAGVAIQVGSLLGAVAMFPPTSIYHVFHSRKDCADPCDS.

The next 6 helical transmembrane spans lie at leucine 14–leucine 34, leucine 47–leucine 67, valine 86–alanine 106, valine 112–phenylalanine 132, phenylalanine 147–valine 167, and phenylalanine 196–leucine 216. The tract at residues glutamate 228 to proline 264 is disordered. Residues serine 247–alanine 258 show a composition bias toward low complexity. 5 consecutive transmembrane segments (helical) span residues alanine 277–valine 297, leucine 312–leucine 332, leucine 339–leucine 359, valine 366–phenylalanine 386, and alanine 404–phenylalanine 424.

Belongs to the riboflavin transporter family. In terms of tissue distribution, highly expressed in brain, fetal brain and salivary gland. Weakly expressed in other tissues.

The protein resides in the cell membrane. The catalysed reaction is riboflavin(in) = riboflavin(out). With respect to regulation, riboflavin transport is Na(+)-independent but moderately pH-sensitive. Activity is strongly inhibited by riboflavin analogs, such as lumiflavin. Weakly inhibited by flavin adenine dinucleotide (FAD) and flavin mononucleotide (FMN). Plasma membrane transporter mediating the uptake by cells of the water soluble vitamin B2/riboflavin that plays a key role in biochemical oxidation-reduction reactions of the carbohydrate, lipid, and amino acid metabolism. Humans are unable to synthesize vitamin B2/riboflavin and must obtain it via intestinal absorption. May also act as a receptor for 4-hydroxybutyrate. Functionally, (Microbial infection) In case of infection by retroviruses, acts as a cell receptor to retroviral envelopes similar to the porcine endogenous retrovirus (PERV-A). This chain is Solute carrier family 52, riboflavin transporter, member 2 (SLC52A2), found in Homo sapiens (Human).